A 133-amino-acid chain; its full sequence is ATP synthase epsilon chain, chloroplastic (133 aa).

This sequence belongs to the ATPase epsilon chain family. In terms of assembly, F-type ATPases have 2 components, CF(1) - the catalytic core - and CF(0) - the membrane proton channel. CF(1) has five subunits: alpha(3), beta(3), gamma(1), delta(1), epsilon(1). CF(0) has three main subunits: a, b and c.

It localises to the plastid. Its subcellular location is the chloroplast thylakoid membrane. Produces ATP from ADP in the presence of a proton gradient across the membrane. This Cyanidium caldarium (Red alga) protein is ATP synthase epsilon chain, chloroplastic.